A 234-amino-acid chain; its full sequence is OVARIAN TUMOR DOMAIN-containing deubiquitinating enzyme 3 (234 aa).

The OTU domain occupies 76–234; that stretch reads YAVDRVKGDG…SGRNHYDLLR (159 aa). The tract at residues 81-87 is cys-loop; sequence VKGDGRC. Residue aspartate 84 is part of the active site. Cysteine 87 functions as the Nucleophile in the catalytic mechanism. The interval 154–164 is variable-loop; sequence IGRHDFWGGES. The segment at 224–229 is his-loop; sequence YSGRNH. Histidine 229 is a catalytic residue.

Belongs to the peptidase C85 family.

It catalyses the reaction Thiol-dependent hydrolysis of ester, thioester, amide, peptide and isopeptide bonds formed by the C-terminal Gly of ubiquitin (a 76-residue protein attached to proteins as an intracellular targeting signal).. Its function is as follows. Hydrolase that can remove conjugated ubiquitin from proteins in vitro and may therefore play an important regulatory role at the level of protein turnover by preventing degradation. Cysteine protease with a preference for 'Lys-63' over 'Lys-48' over 'Met-1' -linked ubiquitin (UB) tetramers (e.g. Ub3 and Ub4) as substrates. Also cleaves RUB-GST fusion. The protein is OVARIAN TUMOR DOMAIN-containing deubiquitinating enzyme 3 of Arabidopsis thaliana (Mouse-ear cress).